The chain runs to 1755 residues: Transposon Ty1-DR5 Gag-Pol polyprotein (1755 aa).

Polar residues-rich tracts occupy residues 1–10 (MESQQLSNYP), 48–60 (TKAN…TPAS), and 127–152 (QSQF…GNTF). Disordered regions lie at residues 1–93 (MESQ…MMTQ), 126–173 (PQSQ…RPPP), and 352–421 (GSRN…SKST). Positions 153–165 (TDSSSADSDMTST) are enriched in low complexity. The tract at residues 299 to 401 (NNGIHINNKV…NSKSKTARAH (103 aa)) is RNA-binding. The span at 402–418 (NVSTSNNSPSTDNDSIS) shows a compositional bias: low complexity. Aspartate 461 (for protease activity; shared with dimeric partner) is an active-site residue. The interval 583-640 (NVHTSESTRKYPYPFIHRMLAHANAQTIRYSLKNNTITYFNESDVDWSSAIDYQCPDC) is integrase-type zinc finger-like. The 176-residue stretch at 660-835 (NSYEPFQYLH…AGLDISTLLP (176 aa)) folds into the Integrase catalytic domain. Mg(2+) is bound by residues aspartate 671 and aspartate 736. 3 disordered regions span residues 956 to 1087 (SKAV…ETEK), 1092 to 1111 (RSPS…NIVP), and 1130 to 1187 (DLPL…DNET). Low complexity predominate over residues 960–969 (SPTDSTPPST). Positions 1005 to 1015 (STPQISNIEST) are enriched in polar residues. A compositionally biased stretch (basic and acidic residues) spans 1038–1053 (ESSHASKSKDFRHSDS). Composition is skewed to polar residues over residues 1054–1082 (YSEN…QISD) and 1101–1111 (PENNSSHNIVP). Positions 1178-1212 (KKRSLEDNETEIKVSRDTWNTKNMRSLEPPRSKKR) match the Bipartite nuclear localization signal motif. The Reverse transcriptase Ty1/copia-type domain occupies 1338–1476 (NNYYITQLDI…DILGLEIKYQ (139 aa)). The Mg(2+) site is built by aspartate 1346, aspartate 1427, aspartate 1428, aspartate 1610, glutamate 1652, and aspartate 1685. The region spanning 1610–1752 (DASYGNQPYY…IKTFKLLTNK (143 aa)) is the RNase H Ty1/copia-type domain.

As to quaternary structure, the capsid protein forms a homotrimer, from which the VLPs are assembled. The protease is a homodimer, whose active site consists of two apposed aspartic acid residues. Post-translationally, initially, virus-like particles (VLPs) are composed of the structural unprocessed proteins Gag and Gag-Pol, and also contain the host initiator methionine tRNA (tRNA(i)-Met) which serves as a primer for minus-strand DNA synthesis, and a dimer of genomic Ty RNA. Processing of the polyproteins occurs within the particle and proceeds by an ordered pathway, called maturation. First, the protease (PR) is released by autocatalytic cleavage of the Gag-Pol polyprotein yielding capsid protein p45 and a Pol-p154 precursor protein. This cleavage is a prerequisite for subsequent processing of Pol-p154 at the remaining sites to release the mature structural and catalytic proteins. Maturation takes place prior to the RT reaction and is required to produce transposition-competent VLPs.

Its subcellular location is the cytoplasm. The protein resides in the nucleus. The catalysed reaction is DNA(n) + a 2'-deoxyribonucleoside 5'-triphosphate = DNA(n+1) + diphosphate. The enzyme catalyses Endonucleolytic cleavage to 5'-phosphomonoester.. Its function is as follows. Capsid protein (CA) is the structural component of the virus-like particle (VLP), forming the shell that encapsulates the retrotransposons dimeric RNA genome. The particles are assembled from trimer-clustered units and there are holes in the capsid shells that allow for the diffusion of macromolecules. CA also has nucleocapsid-like chaperone activity, promoting primer tRNA(i)-Met annealing to the multipartite primer-binding site (PBS), dimerization of Ty1 RNA and initiation of reverse transcription. The aspartyl protease (PR) mediates the proteolytic cleavages of the Gag and Gag-Pol polyproteins after assembly of the VLP. In terms of biological role, reverse transcriptase/ribonuclease H (RT) is a multifunctional enzyme that catalyzes the conversion of the retro-elements RNA genome into dsDNA within the VLP. The enzyme displays a DNA polymerase activity that can copy either DNA or RNA templates, and a ribonuclease H (RNase H) activity that cleaves the RNA strand of RNA-DNA heteroduplexes during plus-strand synthesis and hydrolyzes RNA primers. The conversion leads to a linear dsDNA copy of the retrotransposon that includes long terminal repeats (LTRs) at both ends. Functionally, integrase (IN) targets the VLP to the nucleus, where a subparticle preintegration complex (PIC) containing at least integrase and the newly synthesized dsDNA copy of the retrotransposon must transit the nuclear membrane. Once in the nucleus, integrase performs the integration of the dsDNA into the host genome. This is Transposon Ty1-DR5 Gag-Pol polyprotein (TY1B-DR5) from Saccharomyces cerevisiae (strain ATCC 204508 / S288c) (Baker's yeast).